Consider the following 448-residue polypeptide: MNINAAPQIIGHGSQGVTPGYMSGFGNSFETEALPGALPIGRNSPQRAAYGLYAEQLSGSPFTAPRGANERSWLYRIRPSVKHSGRFTKADMGLWRSAPCLEYDMPIAQLRWDAPSMPQEDLTFLQGVRTMTTAGDVNTQAGMATHMYLITQSMVDQHFYNADGELMFVPQQGSLRLVTEFGVISIEPAEIAVIPRGVKFRVELVDGPARGYLCENYGGAFTLPERGPIGANCLANSRDFLTPVAAYEDRDVPTELFVKWGGALWQTTLPHSPIDVVAWHGNYAPYKYDLRTFSPVGAIGFDHPDPSIFTVLTSPSETAGTANIDFVIFPERWMVAENTFRPPWYHMNIMSEFMGLICGVYDAKPQGFVPGGASLHNMMLPHGPDREAFDHASNGELKPVKLTGTMAFMFETRYPQRVTEYAATAGTLQDDYADCWRGLEKRFDPSRP.

The Proton acceptor role is filled by His303. Residues His346 and Glu352 each contribute to the Fe cation site. Tyr361 and His382 together coordinate homogentisate. His382 lines the Fe cation pocket.

This sequence belongs to the homogentisate dioxygenase family. In terms of assembly, hexamer; dimer of trimers. It depends on Fe cation as a cofactor.

It catalyses the reaction homogentisate + O2 = 4-maleylacetoacetate + H(+). The protein operates within amino-acid degradation; L-phenylalanine degradation; acetoacetate and fumarate from L-phenylalanine: step 4/6. Functionally, involved in the catabolism of homogentisate (2,5-dihydroxyphenylacetate or 2,5-OH-PhAc), a central intermediate in the degradation of phenylalanine and tyrosine. Catalyzes the oxidative ring cleavage of the aromatic ring of homogentisate to yield maleylacetoacetate. The protein is Homogentisate 1,2-dioxygenase of Rhodopseudomonas palustris (strain HaA2).